A 224-amino-acid chain; its full sequence is Cytidylate kinase (224 aa).

11-19 serves as a coordination point for ATP; it reads GPAAAGKST.

This sequence belongs to the cytidylate kinase family. Type 1 subfamily.

It is found in the cytoplasm. It catalyses the reaction CMP + ATP = CDP + ADP. It carries out the reaction dCMP + ATP = dCDP + ADP. This is Cytidylate kinase from Geobacillus sp. (strain WCH70).